The chain runs to 325 residues: Malate dehydrogenase (325 aa).

9–15 (GAAGAIG) contributes to the NAD(+) binding site. Positions 90 and 96 each coordinate substrate. Residues N103, Q110, and 127 to 129 (VGN) contribute to the NAD(+) site. N129 and R160 together coordinate substrate. H185 acts as the Proton acceptor in catalysis.

This sequence belongs to the LDH/MDH superfamily. MDH type 2 family.

It catalyses the reaction (S)-malate + NAD(+) = oxaloacetate + NADH + H(+). Its function is as follows. Catalyzes the reversible oxidation of malate to oxaloacetate. This chain is Malate dehydrogenase, found in Rubrobacter xylanophilus (strain DSM 9941 / JCM 11954 / NBRC 16129 / PRD-1).